A 483-amino-acid chain; its full sequence is ATP-dependent RNA helicase DDX25 (483 aa).

Residue Thr-49 is modified to Phosphothreonine. The Nuclear export signal motif lies at 61–74 (LAANSLLNKLIRQS). A Q motif motif is present at residues 97-125 (KTFEELRLKEELLKGIYAMGFNRPSKIQE). The short motif at 100–114 (EELRLKEELLKGIYA) is the Nuclear localization signal element. A Helicase ATP-binding domain is found at 130-300 (MMLAHPPQNL…ERIIPDPNVI (171 aa)). ATP is bound at residue 143 to 150 (SQSGTGKT). Residues 247–250 (DEAD) carry the DEAD box motif. Residues 311 to 478 (NIRQYYVLCE…QLDPEDMDEI (168 aa)) enclose the Helicase C-terminal domain.

This sequence belongs to the DEAD box helicase family. In terms of processing, phosphorylated on threonine residues. The phosphorylated form is found in the cytoplasm but not in the nucleus. In terms of tissue distribution, isoform 1 is expressed in germ cells. Isoform 2 is highly expressed in Leydig cells and weakly expressed in the pituitary and hypothalamus. Isoform 3 is weakly expressed only in germ cells.

The protein localises to the cytoplasm. It localises to the nucleus. The catalysed reaction is ATP + H2O = ADP + phosphate + H(+). Functionally, ATP-dependent RNA helicase. Required for mRNA export and translation regulation during spermatid development. The polypeptide is ATP-dependent RNA helicase DDX25 (Ddx25) (Rattus norvegicus (Rat)).